The sequence spans 188 residues: Ras-related protein Rap-1 (188 aa).

10–17 serves as a coordination point for GTP; sequence GSGGVGKS. The Effector region motif lies at 32 to 40; that stretch reads YDPTIEDSY. Residues 57 to 61 and 116 to 119 contribute to the GTP site; these read DTAGT and NKCD.

Belongs to the small GTPase superfamily. Ras family.

It catalyses the reaction GTP + H2O = GDP + phosphate + H(+). In terms of biological role, required in the hypodermis for proper formation of the cuticle. This is Ras-related protein Rap-1 (rap-1) from Caenorhabditis elegans.